The sequence spans 775 residues: MKFLSLLLLVGVAQAIVPPREPRPPTGGGKKLLTYKECVPRATLAPRSTSLAWINSDEDGQYISQSDDGALILQNIVTNTNKTLVAADKVPKGFYDYWIKPDLTAVLWATNYTKQYRHSYFANYFILDIEKGSLTPLAEDQSGDIQYAQWNPVDNSIAYVRGNDLYVWNSGKTKRITENGGPDTFNGVPDWVYEEEIFGDRFALWFSPDGEYLAYLRFNETGVPTYTVPYYKNKQKIAPAYPRELEIRYPKVSAKNPTVQFHLLNLASSEETSIPVTAFPEDDLIIGEVAWLSSGHDSVAFRAFNRVQDTEKIVNVKVGSKESKVIRERDGTDGWIDNLLSMSYIGKVNGKEYYVDISDASGWAHLYLYPVDGGKEIALTKGEWEVTAILKVDTKSKLIYFTSTKFHSTTRHVYSVSYDTKVMTPLVNDREAAYYSASFSAKGGYYILSYQGPNVPYQELYSVKDKKKPIKTITSNDALIEKLKDYKLPKITFFEIKLPSGESLNVMQRLPPNFNPFKKYPVLFTPYGGPGAQEVSQAWKALDFKAYITSDPELEYVTWTVDNRGTGFKGRKFRSTVTKRLGFLEPQDQVFAAKEILKNRWADKDHVGMWGWSYGGFLTAKTMETDSGVFTFGMSTAPVSDFRLYDSMYTERYMKTVELNADGYSETAVHKTDGFKNLKGHYLIQHGTGDDNVHFQNSAVLSNTLMNGGVTPDRLTTQWFTDSDHGVRYDNDSTFQYKQLTKMVYDQKQPRPQTTPLHQWSKRVLAALFGEEAEE.

Positions Met1–Ala15 are cleaved as a signal peptide. N-linked (GlcNAc...) asparagine glycans are attached at residues Asn81, Asn111, and Asn219. Catalysis depends on charge relay system residues Ser613, Asp690, and His725. Asn731 carries an N-linked (GlcNAc...) asparagine glycan.

This sequence belongs to the peptidase S9B family.

It is found in the secreted. It carries out the reaction Release of an N-terminal dipeptide, Xaa-Yaa-|-Zaa-, from a polypeptide, preferentially when Yaa is Pro, provided Zaa is neither Pro nor hydroxyproline.. Extracellular dipeptidyl-peptidase which removes N-terminal dipeptides sequentially from polypeptides having unsubstituted N-termini provided that the penultimate residue is proline. Contributes to pathogenicity. In Arthroderma otae (strain ATCC MYA-4605 / CBS 113480) (Microsporum canis), this protein is Dipeptidyl peptidase 4 (DPP4).